The chain runs to 493 residues: Protein LTV1 homolog (493 aa).

3 disordered regions span residues 42–63 (AAAR…QRQE), 97–119 (PNQA…KLML), and 170–207 (IQAM…DENE). Over residues 176–207 (GDSDDEEWDDEDGEEQSDMDFDSDDLNEDENE) the composition is skewed to acidic residues. 5 positions are modified to phosphoserine: S345, S369, S370, S424, and S427. The disordered stretch occupies residues 359 to 387 (VIDEPRRSRRSSASTNPAPIQIDPKTGLP). A coiled-coil region spans residues 437–468 (KDETHEEKKERKRLLKDYRNERRIEKKANTEA). The segment covering 465 to 474 (NTEAFKEEKK) has biased composition (basic and acidic residues). Residues 465 to 493 (NTEAFKEEKKRQTHVKINQRTNQQGASIV) form a disordered region. Over residues 479-493 (VKINQRTNQQGASIV) the composition is skewed to polar residues.

It belongs to the LTV1 family. In terms of assembly, interacts with RpS3; the interaction is RNA-independent. Associates with free 40S ribosome subunits.

It localises to the cytoplasm. Its function is as follows. Necessary for the biogenesis of 40S ribosome subunits by regulating pre-rRNA processing. Non-ribosomal factor required for efficient nuclear export of the ribosomal 40S subunit. Necessary for endoreplication driven by Myc. The protein is Protein LTV1 homolog of Drosophila melanogaster (Fruit fly).